The chain runs to 316 residues: Glutathione synthetase (316 aa).

Positions Asn124–Glu311 constitute an ATP-grasp domain. An ATP-binding site is contributed by Phe151–Gly208. 2 residues coordinate Mg(2+): Glu282 and Asn284.

This sequence belongs to the prokaryotic GSH synthase family. Mg(2+) is required as a cofactor. It depends on Mn(2+) as a cofactor.

The enzyme catalyses gamma-L-glutamyl-L-cysteine + glycine + ATP = glutathione + ADP + phosphate + H(+). It functions in the pathway sulfur metabolism; glutathione biosynthesis; glutathione from L-cysteine and L-glutamate: step 2/2. The protein is Glutathione synthetase of Xanthomonas campestris pv. campestris (strain ATCC 33913 / DSM 3586 / NCPPB 528 / LMG 568 / P 25).